The following is a 128-amino-acid chain: Large ribosomal subunit protein bL20 (128 aa).

This sequence belongs to the bacterial ribosomal protein bL20 family.

Binds directly to 23S ribosomal RNA and is necessary for the in vitro assembly process of the 50S ribosomal subunit. It is not involved in the protein synthesizing functions of that subunit. This chain is Large ribosomal subunit protein bL20, found in Kocuria rhizophila (strain ATCC 9341 / DSM 348 / NBRC 103217 / DC2201).